A 372-amino-acid chain; its full sequence is Spermidine/putrescine import ATP-binding protein PotA (372 aa).

One can recognise an ABC transporter domain in the interval 13–243 (IKLTGISKSF…PKNLFVARFI (231 aa)). 45 to 52 (GPSGCGKT) contributes to the ATP binding site.

It belongs to the ABC transporter superfamily. Spermidine/putrescine importer (TC 3.A.1.11.1) family. In terms of assembly, the complex is composed of two ATP-binding proteins (PotA), two transmembrane proteins (PotB and PotC) and a solute-binding protein (PotD).

Its subcellular location is the cell inner membrane. It carries out the reaction ATP + H2O + polyamine-[polyamine-binding protein]Side 1 = ADP + phosphate + polyamineSide 2 + [polyamine-binding protein]Side 1.. Its function is as follows. Part of the ABC transporter complex PotABCD involved in spermidine/putrescine import. Responsible for energy coupling to the transport system. In Aliivibrio fischeri (strain ATCC 700601 / ES114) (Vibrio fischeri), this protein is Spermidine/putrescine import ATP-binding protein PotA.